The primary structure comprises 334 residues: Holliday junction branch migration complex subunit RuvB (334 aa).

Residues 4 to 184 are large ATPase domain (RuvB-L); it reads EDRLISGTQK…FGIVQRLEYY (181 aa). ATP-binding positions include I23, R24, G65, K68, T69, T70, 131-133, R174, Y184, and R221; that span reads EDY. A Mg(2+)-binding site is contributed by T69. Positions 185–255 are small ATPAse domain (RuvB-S); that stretch reads DLKSLTRIVL…VAKLALDMLE (71 aa). Residues 258–334 are head domain (RuvB-H); that stretch reads NEGFDYMDRK…YLHFGFDKPQ (77 aa). DNA-binding residues include R313 and R318.

The protein belongs to the RuvB family. Homohexamer. Forms an RuvA(8)-RuvB(12)-Holliday junction (HJ) complex. HJ DNA is sandwiched between 2 RuvA tetramers; dsDNA enters through RuvA and exits via RuvB. An RuvB hexamer assembles on each DNA strand where it exits the tetramer. Each RuvB hexamer is contacted by two RuvA subunits (via domain III) on 2 adjacent RuvB subunits; this complex drives branch migration. In the full resolvosome a probable DNA-RuvA(4)-RuvB(12)-RuvC(2) complex forms which resolves the HJ.

The protein localises to the cytoplasm. It carries out the reaction ATP + H2O = ADP + phosphate + H(+). Its function is as follows. The RuvA-RuvB-RuvC complex processes Holliday junction (HJ) DNA during genetic recombination and DNA repair, while the RuvA-RuvB complex plays an important role in the rescue of blocked DNA replication forks via replication fork reversal (RFR). RuvA specifically binds to HJ cruciform DNA, conferring on it an open structure. The RuvB hexamer acts as an ATP-dependent pump, pulling dsDNA into and through the RuvAB complex. RuvB forms 2 homohexamers on either side of HJ DNA bound by 1 or 2 RuvA tetramers; 4 subunits per hexamer contact DNA at a time. Coordinated motions by a converter formed by DNA-disengaged RuvB subunits stimulates ATP hydrolysis and nucleotide exchange. Immobilization of the converter enables RuvB to convert the ATP-contained energy into a lever motion, pulling 2 nucleotides of DNA out of the RuvA tetramer per ATP hydrolyzed, thus driving DNA branch migration. The RuvB motors rotate together with the DNA substrate, which together with the progressing nucleotide cycle form the mechanistic basis for DNA recombination by continuous HJ branch migration. Branch migration allows RuvC to scan DNA until it finds its consensus sequence, where it cleaves and resolves cruciform DNA. The chain is Holliday junction branch migration complex subunit RuvB from Psychromonas ingrahamii (strain DSM 17664 / CCUG 51855 / 37).